The following is a 362-amino-acid chain: Homoserine O-acetyltransferase FUB5 (362 aa).

The 324-residue stretch at N12–L335 folds into the AB hydrolase-1 domain. The Nucleophile role is filled by S110. The segment at R195 to V232 is disordered. The segment covering Q208–H222 has biased composition (polar residues). Catalysis depends on residues D302 and H331.

This sequence belongs to the AB hydrolase superfamily. MetX family.

The enzyme catalyses L-homoserine + acetyl-CoA = O-acetyl-L-homoserine + CoA. It participates in mycotoxin biosynthesis. Functionally, homoserine O-acetyltransferase; part of the gene cluster that mediates the biosynthesis of fusaric acid, a mycotoxin with low to moderate toxicity to animals and humans, but with high phytotoxic properties. L-aspartate is suggested as fusaric acid amino acid precursor that is activated and further processed to O-acetyl-L-homoserine by cluster enzymes aspartate kinase FUB3 and homoserine O-acetyltransferase FUB5, as well as enzymes of the primary metabolism. The polyketide synthase (PKS) FUB1 generates the triketide trans-2-hexenal which is presumptively released by the hydrolase FUB4 and linked to the NRPS-bound amino acid precursor by NAD(P)-dependent dehydrogenase FUB6. FUB1, FUB4, and the non-canonical NRPS Fub8 may form an enzyme complex. Further processing of the NRPS-bound intermediate might be carried out by FUB6 and the O-acetylhomoserine FUB7, enabling a spontaneous electrocyclization to close the carbon backbone of fusaric acid. Dihydrofusaric acid is likely to be released via reduction by the thioester reductase (TR) domain of FUB8 whereupon the final oxidation to fusaric acid may (also) be performed by the FMN-dependent dehydrogenase FUB9. The chain is Homoserine O-acetyltransferase FUB5 from Fusarium oxysporum f. sp. lycopersici (strain 4287 / CBS 123668 / FGSC 9935 / NRRL 34936) (Fusarium vascular wilt of tomato).